The chain runs to 172 residues: Bone marrow stromal antigen 2 (172 aa).

The Cytoplasmic segment spans residues 1-30 (MAPSFYHYLPVPMDEMGGKQGWGSHRQWLG). A helical; Signal-anchor for type II membrane protein transmembrane segment spans residues 31 to 51 (AAILVVLFGVTLVILTIYFAV). At 52–152 (TANSVACRDG…ETSSTVQVNS (101 aa)) the chain is on the extracellular side. An N-linked (GlcNAc...) asparagine glycan is attached at N70. A coiled-coil region spans residues 74 to 147 (LLQRQLTRTQ…LRIQKETSST (74 aa)). N-linked (GlcNAc...) asparagine; atypical glycosylation occurs at N94. N97 carries an N-linked (GlcNAc...) asparagine glycan. S152 carries the GPI-anchor amidated serine lipid modification. A propeptide spans 153-172 (GSSMVVSSLLVLKVSLFLLF) (removed in mature form).

As to quaternary structure, parallel homodimer; disulfide-linked. May form homotetramers under reducing conditions. Isoform 1 and isoform 2 form homodimers and also heterodimers with each other. Dimerization is essential for its antiviral activity. Interacts (via cytoplasmic domain) with ARHGAP44. Interacts with MMP14 (via C-terminal cytoplasmic tail). Interacts with LILRA4/ILT7. Interacts with RNF115. In terms of tissue distribution, in naive mice, specifically expressed on type I interferon-producing cells (at protein level).

The protein resides in the golgi apparatus. Its subcellular location is the trans-Golgi network. It localises to the cell membrane. It is found in the late endosome. The protein localises to the membrane raft. The protein resides in the cytoplasm. Its subcellular location is the apical cell membrane. In terms of biological role, IFN-induced antiviral host restriction factor which efficiently blocks the release of diverse mammalian enveloped viruses by directly tethering nascent virions to the membranes of infected cells. Acts as a direct physical tether, holding virions to the cell membrane and linking virions to each other. The tethered virions can be internalized by endocytosis and subsequently degraded or they can remain on the cell surface. In either case, their spread as cell-free virions is restricted. Its target viruses belong to diverse families, including retroviridae: human immunodeficiency virus type 1 (HIV-1), mouse mammary tumor virus (MMTV) and murine leukemia virus (MLV), filoviridae: ebola virus (EBOV), arenaviridae: lassa virus (LASV), and rhabdoviridae: vesicular stomatitis virus (VSV). Can inhibit cell surface proteolytic activity of MMP14 causing decreased activation of MMP15 which results in inhibition of cell growth and migration. Can stimulate signaling by LILRA4/ILT7 and consequently provide negative feedback to the production of IFN by plasmacytoid dendritic cells in response to viral infection. Plays a role in the organization of the subapical actin cytoskeleton in polarized epithelial cells. The sequence is that of Bone marrow stromal antigen 2 (Bst2) from Mus musculus (Mouse).